The chain runs to 236 residues: Kinetochore protein Spc25 (236 aa).

Residues 44–106 (KNIISAKEAI…DMEAQLLRHT (63 aa)) adopt a coiled-coil conformation. The disordered stretch occupies residues 194 to 217 (EVAGASPVTPSGSERPKATSKHSN).

This sequence belongs to the SPC25 family. In terms of assembly, component of the Ndc80 complex, which is composed of Ndc80, Nuf2 and Spc25.

Its subcellular location is the nucleus. The protein resides in the chromosome. It localises to the centromere. It is found in the kinetochore. Functionally, acts as a component of the essential kinetochore-associated Ndc80 complex, which is required for chromosome segregation and spindle checkpoint activity during meiosis and mitosis. Required for kinetochore integrity and the organization of stable microtubule binding sites in the outer plate of the kinetochore. Participates in SAC signaling that responds specifically to disruptions in spindle microtubule dynamics. The NDC80 complex synergistically enhances the affinity of the SKA1 complex for microtubules and may allow the NDC80 complex to track depolymerizing microtubules. In Drosophila persimilis (Fruit fly), this protein is Kinetochore protein Spc25.